A 784-amino-acid polypeptide reads, in one-letter code: Lon protease (784 aa).

The Lon N-terminal domain occupies 11–204 (IPVLPLRDVV…YLMAMMESEI (194 aa)). 356–363 (GPPGVGKT) serves as a coordination point for ATP. The region spanning 592–773 (ENRVGQVTGL…EEVLALALQN (182 aa)) is the Lon proteolytic domain. Catalysis depends on residues S679 and K722.

It belongs to the peptidase S16 family. Homohexamer. Organized in a ring with a central cavity.

Its subcellular location is the cytoplasm. It carries out the reaction Hydrolysis of proteins in presence of ATP.. ATP-dependent serine protease that mediates the selective degradation of mutant and abnormal proteins as well as certain short-lived regulatory proteins. Required for cellular homeostasis and for survival from DNA damage and developmental changes induced by stress. Degrades polypeptides processively to yield small peptide fragments that are 5 to 10 amino acids long. Binds to DNA in a double-stranded, site-specific manner. The chain is Lon protease from Erwinia amylovora (Fire blight bacteria).